We begin with the raw amino-acid sequence, 473 residues long: Ribulose bisphosphate carboxylase large chain 3 (473 aa).

Substrate is bound by residues Asn116 and Thr166. Residue Lys168 is the Proton acceptor of the active site. Lys170 is a substrate binding site. Residues Lys194, Asp196, and Glu197 each coordinate Mg(2+). Lys194 carries the N6-carboxylysine modification. His287 serves as the catalytic Proton acceptor. The substrate site is built by Arg288, His320, and Ser372.

Belongs to the RuBisCO large chain family. Type I subfamily. In terms of assembly, heterohexadecamer of 8 large chains and 8 small chains. It depends on Mg(2+) as a cofactor.

It carries out the reaction 2 (2R)-3-phosphoglycerate + 2 H(+) = D-ribulose 1,5-bisphosphate + CO2 + H2O. The catalysed reaction is D-ribulose 1,5-bisphosphate + O2 = 2-phosphoglycolate + (2R)-3-phosphoglycerate + 2 H(+). Its function is as follows. RuBisCO catalyzes two reactions: the carboxylation of D-ribulose 1,5-bisphosphate, the primary event in carbon dioxide fixation, as well as the oxidative fragmentation of the pentose substrate. Both reactions occur simultaneously and in competition at the same active site. The polypeptide is Ribulose bisphosphate carboxylase large chain 3 (Nitrobacter hamburgensis (strain DSM 10229 / NCIMB 13809 / X14)).